The sequence spans 188 residues: UPF0301 protein XOO1309 (188 aa).

The protein belongs to the UPF0301 (AlgH) family.

The sequence is that of UPF0301 protein XOO1309 from Xanthomonas oryzae pv. oryzae (strain MAFF 311018).